Consider the following 247-residue polypeptide: Adenosylcobinamide-GDP ribazoletransferase (247 aa).

The next 5 helical transmembrane spans lie at 34–54 (IITFPLIGLLLGAISGLVFMV), 59–79 (CGVPLAALFSVLVLALMTGGF), 113–133 (GGLALIFVVLAKILVLSELAL), 138–158 (ILALLAAACAVSRGTAALLMY), and 194–214 (VLLPGMHGVAAMVVTMVAIFI).

The protein belongs to the CobS family. Requires Mg(2+) as cofactor.

The protein resides in the cell inner membrane. It carries out the reaction alpha-ribazole + adenosylcob(III)inamide-GDP = adenosylcob(III)alamin + GMP + H(+). It catalyses the reaction alpha-ribazole 5'-phosphate + adenosylcob(III)inamide-GDP = adenosylcob(III)alamin 5'-phosphate + GMP + H(+). Its pathway is cofactor biosynthesis; adenosylcobalamin biosynthesis; adenosylcobalamin from cob(II)yrinate a,c-diamide: step 7/7. In terms of biological role, joins adenosylcobinamide-GDP and alpha-ribazole to generate adenosylcobalamin (Ado-cobalamin). Also synthesizes adenosylcobalamin 5'-phosphate from adenosylcobinamide-GDP and alpha-ribazole 5'-phosphate. This is Adenosylcobinamide-GDP ribazoletransferase from Shigella boydii serotype 4 (strain Sb227).